A 72-amino-acid chain; its full sequence is Translation initiation factor IF-1 (72 aa).

The S1-like domain occupies 1–72; sequence MAKEEMLEFP…TKGRINYRFK (72 aa).

It belongs to the IF-1 family. As to quaternary structure, component of the 30S ribosomal translation pre-initiation complex which assembles on the 30S ribosome in the order IF-2 and IF-3, IF-1 and N-formylmethionyl-tRNA(fMet); mRNA recruitment can occur at any time during PIC assembly.

Its subcellular location is the cytoplasm. In terms of biological role, one of the essential components for the initiation of protein synthesis. Stabilizes the binding of IF-2 and IF-3 on the 30S subunit to which N-formylmethionyl-tRNA(fMet) subsequently binds. Helps modulate mRNA selection, yielding the 30S pre-initiation complex (PIC). Upon addition of the 50S ribosomal subunit IF-1, IF-2 and IF-3 are released leaving the mature 70S translation initiation complex. The protein is Translation initiation factor IF-1 of Paracoccus denitrificans (strain Pd 1222).